The chain runs to 325 residues: G/U mismatch-specific uracil DNA glycosylase (325 aa).

Residues 1–11 are compositionally biased toward basic and acidic residues; sequence MNDIETRDTGT. Residues 1–50 are disordered; sequence MNDIETRDTGTKNDNSSEFNLSVKSHKRKRSFDDENLELEESREETSGGI. A compositionally biased stretch (polar residues) spans 12–23; that stretch reads KNDNSSEFNLSV. Positions 34–43 are enriched in acidic residues; it reads DENLELEESR.

It belongs to the uracil-DNA glycosylase (UDG) superfamily. TDG/mug family.

The protein resides in the nucleus. It catalyses the reaction Specifically hydrolyzes mismatched double-stranded DNA and polynucleotides, releasing free uracil.. Removes uracil from G/U mispairs in ssDNA. Also corrects G/G mispairs. Does not catalyze the removal of thymine from G/T mispairs. This chain is G/U mismatch-specific uracil DNA glycosylase (thp1), found in Schizosaccharomyces pombe (strain 972 / ATCC 24843) (Fission yeast).